The following is a 161-amino-acid chain: Putative outer membrane protein YedS (161 aa).

The signal sequence occupies residues 1-21; that stretch reads MKRKVLAMLVPALLVAGAANA.

Belongs to the Gram-negative porin family.

Its subcellular location is the cell outer membrane. The protein is Putative outer membrane protein YedS (yedS) of Escherichia coli (strain K12).